Consider the following 480-residue polypeptide: Probable cytosol aminopeptidase (480 aa).

Positions 248 and 253 each coordinate Mn(2+). K260 is an active-site residue. Mn(2+) contacts are provided by D271, D330, and E332. R334 is a catalytic residue.

It belongs to the peptidase M17 family. Mn(2+) serves as cofactor.

The protein resides in the cytoplasm. It catalyses the reaction Release of an N-terminal amino acid, Xaa-|-Yaa-, in which Xaa is preferably Leu, but may be other amino acids including Pro although not Arg or Lys, and Yaa may be Pro. Amino acid amides and methyl esters are also readily hydrolyzed, but rates on arylamides are exceedingly low.. The enzyme catalyses Release of an N-terminal amino acid, preferentially leucine, but not glutamic or aspartic acids.. Functionally, presumably involved in the processing and regular turnover of intracellular proteins. Catalyzes the removal of unsubstituted N-terminal amino acids from various peptides. This chain is Probable cytosol aminopeptidase, found in Solibacter usitatus (strain Ellin6076).